A 130-amino-acid polypeptide reads, in one-letter code: Putative protein ZNF815 (130 aa).

The chain is Putative protein ZNF815 (ZNF815P) from Homo sapiens (Human).